The chain runs to 106 residues: Iron-sulfur cluster assembly protein CyaY (106 aa).

Belongs to the frataxin family.

Functionally, involved in iron-sulfur (Fe-S) cluster assembly. May act as a regulator of Fe-S biogenesis. The sequence is that of Iron-sulfur cluster assembly protein CyaY from Salmonella schwarzengrund (strain CVM19633).